A 555-amino-acid polypeptide reads, in one-letter code: Formate--tetrahydrofolate ligase (555 aa).

Residue 64–71 (TKAGIGKT) participates in ATP binding.

It belongs to the formate--tetrahydrofolate ligase family.

The catalysed reaction is (6S)-5,6,7,8-tetrahydrofolate + formate + ATP = (6R)-10-formyltetrahydrofolate + ADP + phosphate. It participates in one-carbon metabolism; tetrahydrofolate interconversion. The sequence is that of Formate--tetrahydrofolate ligase from Phocaeicola vulgatus (strain ATCC 8482 / DSM 1447 / JCM 5826 / CCUG 4940 / NBRC 14291 / NCTC 11154) (Bacteroides vulgatus).